We begin with the raw amino-acid sequence, 914 residues long: Isoleucine--tRNA ligase (914 aa).

A 'HIGH' region motif is present at residues 64-74; it reads PYANGNFHLGH. L-isoleucyl-5'-AMP is bound at residue Glu557. A 'KMSKS' region motif is present at residues 598-602; that stretch reads AMSKS. Lys601 is a binding site for ATP. Zn(2+) contacts are provided by Cys889, Cys892, Cys906, and Cys909.

The protein belongs to the class-I aminoacyl-tRNA synthetase family. IleS type 1 subfamily. As to quaternary structure, monomer. Zn(2+) serves as cofactor.

The protein localises to the cytoplasm. The enzyme catalyses tRNA(Ile) + L-isoleucine + ATP = L-isoleucyl-tRNA(Ile) + AMP + diphosphate. Functionally, catalyzes the attachment of isoleucine to tRNA(Ile). As IleRS can inadvertently accommodate and process structurally similar amino acids such as valine, to avoid such errors it has two additional distinct tRNA(Ile)-dependent editing activities. One activity is designated as 'pretransfer' editing and involves the hydrolysis of activated Val-AMP. The other activity is designated 'posttransfer' editing and involves deacylation of mischarged Val-tRNA(Ile). The chain is Isoleucine--tRNA ligase from Leptospira borgpetersenii serovar Hardjo-bovis (strain JB197).